Here is a 590-residue protein sequence, read N- to C-terminus: Ankyrin repeat domain-containing protein 13A (590 aa).

ANK repeat units follow at residues 40 to 69 (RGRT…DVTK) and 73 to 102 (QGWT…YHNT). Ser-205 is subject to Phosphoserine. UIM domains are found at residues 483 to 502 (EDYE…SSRS), 519 to 538 (TYDA…STEG), 549 to 568 (RFDN…LEEW), and 574 to 590 (EEEA…LTDK). Ser-586 carries the phosphoserine modification.

Interacts (via the UIM 3 and 4 repeats) with EGFR (ubiquitinated); the interaction is direct, inhibited by ANKRD13A monoubiquitination and may regulate EGFR internalization. Monoubiquitinated, inhibits interaction with ubiquitinated EGFR.

The protein resides in the cell membrane. The protein localises to the late endosome. Functionally, ubiquitin-binding protein that specifically recognizes and binds 'Lys-63'-linked ubiquitin. Does not bind 'Lys-48'-linked ubiquitin. Positively regulates the internalization of ligand-activated EGFR by binding to the Ub moiety of ubiquitinated EGFR at the cell membrane. The sequence is that of Ankyrin repeat domain-containing protein 13A (ANKRD13A) from Homo sapiens (Human).